The chain runs to 232 residues: tRNA1(Val) (adenine(37)-N6)-methyltransferase (232 aa).

The protein belongs to the methyltransferase superfamily. tRNA (adenine-N(6)-)-methyltransferase family.

It is found in the cytoplasm. The catalysed reaction is adenosine(37) in tRNA1(Val) + S-adenosyl-L-methionine = N(6)-methyladenosine(37) in tRNA1(Val) + S-adenosyl-L-homocysteine + H(+). In terms of biological role, specifically methylates the adenine in position 37 of tRNA(1)(Val) (anticodon cmo5UAC). The polypeptide is tRNA1(Val) (adenine(37)-N6)-methyltransferase (Haemophilus influenzae (strain PittGG)).